Reading from the N-terminus, the 214-residue chain is Adenylate kinase (214 aa).

10-15 (GAGKGT) contributes to the ATP binding site. The NMP stretch occupies residues 30-59 (STGDMLRAAIKAGTELGLNAKAVMDAGQLV). AMP-binding positions include Thr31, Arg36, 57-59 (QLV), 85-88 (GFPR), and Gln92. The tract at residues 122–159 (GRRVHSGSGRTYHVVFNPPKVEGKDDVTGEDLVIRADD) is LID. Residues Arg123 and 132–133 (TY) contribute to the ATP site. Residues Arg156 and Arg167 each coordinate AMP. Gln200 contacts ATP.

It belongs to the adenylate kinase family. Monomer.

Its subcellular location is the cytoplasm. The catalysed reaction is AMP + ATP = 2 ADP. It participates in purine metabolism; AMP biosynthesis via salvage pathway; AMP from ADP: step 1/1. Functionally, catalyzes the reversible transfer of the terminal phosphate group between ATP and AMP. Plays an important role in cellular energy homeostasis and in adenine nucleotide metabolism. This is Adenylate kinase from Aeromonas salmonicida (strain A449).